The sequence spans 218 residues: Adenylate kinase (218 aa).

10–15 (GAGKGT) provides a ligand contact to ATP. Positions 30–59 (STGDMLRAAVKAGTPLGLEAKAIMDAGGLV) are NMP. AMP contacts are provided by residues T31, R36, 57–59 (GLV), 85–88 (GFPR), and Q92. Residues 122-159 (GRRVHLASGRTYHVTFNPPKAAGKDDVTGEDLVQRDDD) are LID. ATP contacts are provided by residues R123 and 132–133 (TY). AMP contacts are provided by R156 and R167. Residue R203 participates in ATP binding.

It belongs to the adenylate kinase family. As to quaternary structure, monomer.

It localises to the cytoplasm. It carries out the reaction AMP + ATP = 2 ADP. The protein operates within purine metabolism; AMP biosynthesis via salvage pathway; AMP from ADP: step 1/1. Its function is as follows. Catalyzes the reversible transfer of the terminal phosphate group between ATP and AMP. Plays an important role in cellular energy homeostasis and in adenine nucleotide metabolism. This is Adenylate kinase from Chromobacterium violaceum (strain ATCC 12472 / DSM 30191 / JCM 1249 / CCUG 213 / NBRC 12614 / NCIMB 9131 / NCTC 9757 / MK).